Reading from the N-terminus, the 1097-residue chain is Leukemia inhibitory factor receptor (1097 aa).

An N-terminal signal peptide occupies residues 1–44; that stretch reads MMDIYVCLKRPSWMVDNKRMRTASNFQWLLSTFILLYLMNQVNS. Topologically, residues 45 to 833 are extracellular; it reads QKKGAPHDLK…SMYVVTKENS (789 aa). The 90-residue stretch at 49–138 folds into the Fibronectin type-III 1 domain; sequence APHDLKCVTN…EQNVSLIPDT (90 aa). 2 cysteine pairs are disulfide-bonded: C55–C65 and C82–C90. Residues N64, N85, N131, N143, N191, N243, and N303 are each glycosylated (N-linked (GlcNAc...) asparagine). C213 and C270 form a disulfide bridge. Fibronectin type-III domains follow at residues 335–434, 435–534, 538–629, 627–719, and 724–833; these read TPQQ…VYPH, TPTS…TEAS, GPDT…IPND, PNDD…IGYI, and PIVA…KENS. C341 and C351 are disulfide-bonded. 6 N-linked (GlcNAc...) asparagine glycosylation sites follow: N390, N407, N426, N445, N481, and N489. A disulfide bridge links C466 with C511. Residues 519–523 carry the WSXWS motif motif; the sequence is WSKWS. N-linked (GlcNAc...) asparagine glycosylation is found at N572, N652, N663, N680, N729, and N787. The helical transmembrane segment at 834–858 threads the bilayer; the sequence is VGLIIAILIPVAVAVIVGVVTSILC. Residues 859–1097 are Cytoplasmic-facing; it reads YRKREWIKET…TNFFQNKPND (239 aa). A Box 1 motif motif is present at residues 869–877; that stretch reads FYPDIPNPE. S927 is modified (phosphoserine). Residues 983-1005 form a disordered region; it reads PQAKPEEEQENDPVGGAGYKPQM. Residue S1044 is modified to Phosphoserine. The tract at residues 1066–1097 is disordered; it reads RQFLIPPKDEDSPKSNGGGWSFTNFFQNKPND. Over residues 1086–1097 the composition is skewed to polar residues; it reads SFTNFFQNKPND.

It belongs to the type I cytokine receptor family. Type 2 subfamily. In terms of assembly, heterodimer composed of LIFR and IL6ST. The heterodimer formed by LIFR and IL6ST interacts with the complex formed by CNTF and CNTFR.

The protein resides in the cell membrane. It is found in the secreted. In terms of biological role, signal-transducing molecule. May have a common pathway with IL6ST. The soluble form inhibits the biological activity of LIF by blocking its binding to receptors on target cells. This chain is Leukemia inhibitory factor receptor (LIFR), found in Homo sapiens (Human).